Consider the following 201-residue polypeptide: Large ribosomal subunit protein uL4 (201 aa).

The tract at residues 44–71 (RAQKTRAEVTGSGKKPWRQKGTGRARSG) is disordered.

It belongs to the universal ribosomal protein uL4 family. In terms of assembly, part of the 50S ribosomal subunit.

Functionally, one of the primary rRNA binding proteins, this protein initially binds near the 5'-end of the 23S rRNA. It is important during the early stages of 50S assembly. It makes multiple contacts with different domains of the 23S rRNA in the assembled 50S subunit and ribosome. Forms part of the polypeptide exit tunnel. The protein is Large ribosomal subunit protein uL4 of Escherichia fergusonii (strain ATCC 35469 / DSM 13698 / CCUG 18766 / IAM 14443 / JCM 21226 / LMG 7866 / NBRC 102419 / NCTC 12128 / CDC 0568-73).